The primary structure comprises 97 residues: Integration host factor subunit beta (97 aa).

The protein belongs to the bacterial histone-like protein family. In terms of assembly, heterodimer of an alpha and a beta chain.

Its function is as follows. This protein is one of the two subunits of integration host factor, a specific DNA-binding protein that functions in genetic recombination as well as in transcriptional and translational control. The sequence is that of Integration host factor subunit beta from Buchnera aphidicola subsp. Cinara cedri (strain Cc).